The following is a 605-amino-acid chain: Dolichyl-diphosphooligosaccharide--protein glycosyltransferase subunit 1 (605 aa).

An N-terminal signal peptide occupies residues 1 to 22 (MEAPIVLLLLLWLALAPTPGSA). At 23 to 437 (SSEAPPLVNE…FNKVLMLQEP (415 aa)) the chain is on the lumenal side. N6-acetyllysine is present on K185. An N-linked (GlcNAc...) asparagine glycan is attached at N297. A helical membrane pass occupies residues 438-455 (LLVVAAFYILFFTVIIYV). Over 456–605 (RLDFSITKDP…TKIDHILDAL (150 aa)) the chain is Cytoplasmic. K536 is subject to N6-acetyllysine; alternate. K536 participates in a covalent cross-link: Glycyl lysine isopeptide (Lys-Gly) (interchain with G-Cter in SUMO2); alternate.

The protein belongs to the OST1 family. In terms of assembly, component of the oligosaccharyltransferase (OST) complex. OST exists in two different complex forms which contain common core subunits RPN1, RPN2, OST48, OST4, DAD1 and TMEM258, either STT3A or STT3B as catalytic subunits, and form-specific accessory subunits. STT3A complex assembly occurs through the formation of 3 subcomplexes. Subcomplex 1 contains RPN1 and TMEM258, subcomplex 2 contains the STT3A-specific subunits STT3A, DC2/OSTC, and KCP2 as well as the core subunit OST4, and subcomplex 3 contains RPN2, DAD1, and OST48. The STT3A complex can form stable complexes with the Sec61 complex or with both the Sec61 and TRAP complexes. Interacts with TMEM35A/NACHO. In terms of processing, ubiquitinated by the ECS(ASB11) complex. Ufmylated by UFL1 in response to endoplasmic reticulum stress, promoting reticulophagy of endoplasmic reticulum sheets. Expressed in all tissues tested.

The protein localises to the endoplasmic reticulum membrane. Its pathway is protein modification; protein glycosylation. In terms of biological role, subunit of the oligosaccharyl transferase (OST) complex that catalyzes the initial transfer of a defined glycan (Glc(3)Man(9)GlcNAc(2) in eukaryotes) from the lipid carrier dolichol-pyrophosphate to an asparagine residue within an Asn-X-Ser/Thr consensus motif in nascent polypeptide chains, the first step in protein N-glycosylation. N-glycosylation occurs cotranslationally and the complex associates with the Sec61 complex at the channel-forming translocon complex that mediates protein translocation across the endoplasmic reticulum (ER). All subunits are required for a maximal enzyme activity. In Rattus norvegicus (Rat), this protein is Dolichyl-diphosphooligosaccharide--protein glycosyltransferase subunit 1.